The primary structure comprises 823 residues: Ciliated left-right organizer ZP-N domains-containing protein (823 aa).

The N-terminal stretch at 1 to 22 (MWGSPALAWAVWLACVQPTVFP) is a signal peptide. Disordered stretches follow at residues 206–242 (MGLY…LLPL), 269–422 (LVHI…DLLH), 434–520 (GPFL…SPSP), and 632–656 (LPRE…EGPG). Residues 216 to 230 (TVTVQSPRQGLLQRW) show a composition bias toward pro residues. Low complexity predominate over residues 389–402 (GPETPPAGVPPAAS).

The protein localises to the secreted. Its function is as follows. Plays a role in left-right patterning process. The protein is Ciliated left-right organizer ZP-N domains-containing protein of Homo sapiens (Human).